The chain runs to 279 residues: Tryptophan 2,3-dioxygenase (279 aa).

Substrate-binding positions include 48–52 (FIIQH), Tyr-110, and Arg-114. Residue His-237 coordinates heme. Thr-251 serves as a coordination point for substrate.

This sequence belongs to the tryptophan 2,3-dioxygenase family. As to quaternary structure, homotetramer. Heme is required as a cofactor.

It carries out the reaction L-tryptophan + O2 = N-formyl-L-kynurenine. The protein operates within amino-acid degradation; L-tryptophan degradation via kynurenine pathway; L-kynurenine from L-tryptophan: step 1/2. Functionally, heme-dependent dioxygenase that catalyzes the oxidative cleavage of the L-tryptophan (L-Trp) pyrrole ring and converts L-tryptophan to N-formyl-L-kynurenine. Catalyzes the oxidative cleavage of the indole moiety. The polypeptide is Tryptophan 2,3-dioxygenase (Bradyrhizobium sp. (strain BTAi1 / ATCC BAA-1182)).